The following is a 362-amino-acid chain: Anthranilate phosphoribosyltransferase (362 aa).

5-phospho-alpha-D-ribose 1-diphosphate contacts are provided by residues Gly96, Gly99–Asp100, Thr104, Asn106–Thr109, Lys124–Ser132, and Gly136. Anthranilate is bound at residue Gly96. Position 108 (Ser108) interacts with Mg(2+). An anthranilate-binding site is contributed by Asn127. Arg182 contacts anthranilate. Mg(2+) is bound by residues Asp240 and Glu241.

Belongs to the anthranilate phosphoribosyltransferase family. Homodimer. It depends on Mg(2+) as a cofactor.

It catalyses the reaction N-(5-phospho-beta-D-ribosyl)anthranilate + diphosphate = 5-phospho-alpha-D-ribose 1-diphosphate + anthranilate. Its pathway is amino-acid biosynthesis; L-tryptophan biosynthesis; L-tryptophan from chorismate: step 2/5. In terms of biological role, catalyzes the transfer of the phosphoribosyl group of 5-phosphorylribose-1-pyrophosphate (PRPP) to anthranilate to yield N-(5'-phosphoribosyl)-anthranilate (PRA). In Rhodococcus jostii (strain RHA1), this protein is Anthranilate phosphoribosyltransferase.